The sequence spans 420 residues: Tryptophan synthase beta chain (420 aa).

The residue at position 99 (Lys-99) is an N6-(pyridoxal phosphate)lysine.

This sequence belongs to the TrpB family. In terms of assembly, tetramer of two alpha and two beta chains. The cofactor is pyridoxal 5'-phosphate.

The enzyme catalyses (1S,2R)-1-C-(indol-3-yl)glycerol 3-phosphate + L-serine = D-glyceraldehyde 3-phosphate + L-tryptophan + H2O. It participates in amino-acid biosynthesis; L-tryptophan biosynthesis; L-tryptophan from chorismate: step 5/5. Functionally, the beta subunit is responsible for the synthesis of L-tryptophan from indole and L-serine. The protein is Tryptophan synthase beta chain of Helicobacter hepaticus (strain ATCC 51449 / 3B1).